The chain runs to 170 residues: Protein Rex (170 aa).

Residues 1–16 are compositionally biased toward basic residues; that stretch reads MPKTRRQRTRRARRNR. 2 disordered regions span residues 1–27 and 69–170; these read MPKTRRQRTRRARRNRPPTPWPISQDL and VQST…GEKP. Residues 2–19 carry the Nuclear localization signal, and RNA-binding (RxRE) motif; that stretch reads PKTRRQRTRRARRNRPPT. Residues 57–71 form a homomultimerization region; that stretch reads PPAYIDMPSWPPVQS. Residues 82 to 95 are compositionally biased toward low complexity; sequence ALSALLSNTLSLAS. The Nuclear export signal signature appears at 83 to 94; sequence LSALLSNTLSLA. A homomultimerization region spans residues 124–132; that stretch reads PSFNQCEST. The span at 143-160 shows a compositional bias: low complexity; sequence PSGISSPPSPSPNLASVP. Residues Ser151 and Ser153 each carry the phosphoserine; by host modification. Polar residues predominate over residues 161 to 170; that stretch reads KTSTPPGEKP.

This sequence belongs to the deltaretrovirus Rex protein family. As to quaternary structure, homomultimer. In terms of processing, phosphorylation is essential for RNA-binding and function.

It is found in the host nucleus. The protein resides in the host nucleolus. Its subcellular location is the host cytoplasm. Rex escorts unspliced gag-pro-pol and singly spliced env mRNAs out of the nucleus of infected cells. These mRNAs carry a recognition sequence called Rex responsive element (RxRE or XRE) located at the 3' region of the long terminal repeat (LTR). This function is essential since most HTLV proteins are translated from unspliced or partially spliced pre-mRNAs that cannot exit the nucleus by the pathway used by fully processed cellular mRNAs. The sequence is that of Protein Rex from Human T-cell leukemia virus 2 (HTLV-2).